We begin with the raw amino-acid sequence, 1238 residues long: ATP-dependent helicase/nuclease subunit A (1238 aa).

A UvrD-like helicase ATP-binding domain is found at 6-474; sequence TKWTETQKSA…IKLSENFRSR (469 aa). Residue 27-34 participates in ATP binding; it reads AGAGTGKT. The UvrD-like helicase C-terminal domain maps to 512 to 811; it reads PFEGNCGGDV…RIMSIHKSKG (300 aa).

Belongs to the helicase family. AddA subfamily. In terms of assembly, heterodimer of AddA and AddB/RexB. It depends on Mg(2+) as a cofactor.

It carries out the reaction Couples ATP hydrolysis with the unwinding of duplex DNA by translocating in the 3'-5' direction.. The catalysed reaction is ATP + H2O = ADP + phosphate + H(+). In terms of biological role, the heterodimer acts as both an ATP-dependent DNA helicase and an ATP-dependent, dual-direction single-stranded exonuclease. Recognizes the chi site generating a DNA molecule suitable for the initiation of homologous recombination. The AddA nuclease domain is required for chi fragment generation; this subunit has the helicase and 3' -&gt; 5' nuclease activities. This Clostridium kluyveri (strain NBRC 12016) protein is ATP-dependent helicase/nuclease subunit A.